Consider the following 481-residue polypeptide: UDP-N-acetylmuramate--L-alanine ligase (481 aa).

ATP is bound at residue 115–121; the sequence is GTHGKTT.

Belongs to the MurCDEF family.

The protein localises to the cytoplasm. The enzyme catalyses UDP-N-acetyl-alpha-D-muramate + L-alanine + ATP = UDP-N-acetyl-alpha-D-muramoyl-L-alanine + ADP + phosphate + H(+). Its pathway is cell wall biogenesis; peptidoglycan biosynthesis. In terms of biological role, cell wall formation. The polypeptide is UDP-N-acetylmuramate--L-alanine ligase (Rhodospirillum rubrum (strain ATCC 11170 / ATH 1.1.1 / DSM 467 / LMG 4362 / NCIMB 8255 / S1)).